The following is a 325-amino-acid chain: Aspartate carbamoyltransferase catalytic subunit (325 aa).

2 residues coordinate carbamoyl phosphate: Arg-55 and Thr-56. Lys-83 serves as a coordination point for L-aspartate. Residues Arg-105, His-135, and Gln-138 each contribute to the carbamoyl phosphate site. Arg-176 and Arg-230 together coordinate L-aspartate. Gly-271 and Pro-272 together coordinate carbamoyl phosphate.

It belongs to the aspartate/ornithine carbamoyltransferase superfamily. ATCase family. Heterododecamer (2C3:3R2) of six catalytic PyrB chains organized as two trimers (C3), and six regulatory PyrI chains organized as three dimers (R2).

The enzyme catalyses carbamoyl phosphate + L-aspartate = N-carbamoyl-L-aspartate + phosphate + H(+). It participates in pyrimidine metabolism; UMP biosynthesis via de novo pathway; (S)-dihydroorotate from bicarbonate: step 2/3. In terms of biological role, catalyzes the condensation of carbamoyl phosphate and aspartate to form carbamoyl aspartate and inorganic phosphate, the committed step in the de novo pyrimidine nucleotide biosynthesis pathway. This Streptomyces avermitilis (strain ATCC 31267 / DSM 46492 / JCM 5070 / NBRC 14893 / NCIMB 12804 / NRRL 8165 / MA-4680) protein is Aspartate carbamoyltransferase catalytic subunit.